Here is a 965-residue protein sequence, read N- to C-terminus: MENTPSHINKTEPSLDKTYSPQEIEQPLYEHWEKQGYFKPNGDTSKESYCIMIPPPNVTGSLHMGHAFQQTIMDTLIRYQRMQGKNTLWQAGTDHAGIATQMVVERKIAAEEGKTRHDYGRDAFIDKIWEWKGESGGTITRQMRRLGNSVDWERERFTMDEGLSNAVKEVFVRLHKEDLIYRGKRLVNWDPKLRTAISDLEVENRESKGSMWHLRYPLADGAKTAEGKDYLVVATTRPETVLGDTGVAVNPEDPRYKDLIGKEVILPLVGRRIPILGDEHADMEKGTGCVKITPAHDFNDYEVGKRHALPMINILTFDGDIRSEAEVFDTHGEATDAFSNAIPAQFQGLERFAARKAVVAEFEKLGLLEEVKPHDLTVPYGDRGGVVIEPMLTDQWYVRTAPLAKVAIEAVENGEIQFVPKQYENMYYSWMRDIQDWCISRQLWWGHRIPAWYDEQGNVYVGRDEAEVRRDNNLGAEVALRQDEDVLDTWFSSGLWTFSTLGWPEQTDALKTFHPTSVVVSGFDIIFFWIARMIMLTMHFMKDENGKPQVPFKTVYMTGLIRDDEGQKMSKSKGNVIDPLDMVDGISLEALLEKRTGNMMQPQLAEKIRKRTEKQFPNGIEPHGTDALRFTLAALASTGRDINWDMKRLEGYRNFCNKLWNASRFVLMNTEGQDCGQNGGEMVLSLADRWILAEFNQTIKAYREAMDTYRFDLAAGILYEFTWNQFCDWYLELTKPVMNSGSEAELRGTRHTLIQVLEALLRLAHPIIPYITETIWQRVKNLKGITADTIMLQPFPEYDASQVDEQALSDLEWIKQTIIAVRNIRAEMNIAPGKPLEVMLRGANAQAQRRVLENQSFIQSLARLSSLTLLAEGDKGPVSVTKLVEGAEVLIPMAGLIDKATELDRLAKEVAKLDAEIERIEGKLGNEGFVARAPEAVVAKERERLAACAEAKQKLIEQQATIAAL.

Positions 1–22 (MENTPSHINKTEPSLDKTYSPQ) are disordered. The 'HIGH' region motif lies at 56–66 (PNVTGSLHMGH). Residues 568–572 (KMSKS) carry the 'KMSKS' region motif. An ATP-binding site is contributed by Lys-571. A coiled-coil region spans residues 896–965 (LIDKATELDR…IEQQATIAAL (70 aa)).

The protein belongs to the class-I aminoacyl-tRNA synthetase family. ValS type 1 subfamily. Monomer.

The protein localises to the cytoplasm. It carries out the reaction tRNA(Val) + L-valine + ATP = L-valyl-tRNA(Val) + AMP + diphosphate. In terms of biological role, catalyzes the attachment of valine to tRNA(Val). As ValRS can inadvertently accommodate and process structurally similar amino acids such as threonine, to avoid such errors, it has a 'posttransfer' editing activity that hydrolyzes mischarged Thr-tRNA(Val) in a tRNA-dependent manner. The sequence is that of Valine--tRNA ligase from Yersinia pseudotuberculosis serotype I (strain IP32953).